We begin with the raw amino-acid sequence, 372 residues long: Spermidine/putrescine import ATP-binding protein PotA (372 aa).

The ABC transporter domain occupies 13-243 (IKLTGISKSF…PKNLFVARFI (231 aa)). 45 to 52 (GPSGCGKT) provides a ligand contact to ATP.

It belongs to the ABC transporter superfamily. Spermidine/putrescine importer (TC 3.A.1.11.1) family. As to quaternary structure, the complex is composed of two ATP-binding proteins (PotA), two transmembrane proteins (PotB and PotC) and a solute-binding protein (PotD).

Its subcellular location is the cell inner membrane. It carries out the reaction ATP + H2O + polyamine-[polyamine-binding protein]Side 1 = ADP + phosphate + polyamineSide 2 + [polyamine-binding protein]Side 1.. Functionally, part of the ABC transporter complex PotABCD involved in spermidine/putrescine import. Responsible for energy coupling to the transport system. The protein is Spermidine/putrescine import ATP-binding protein PotA of Aliivibrio fischeri (strain ATCC 700601 / ES114) (Vibrio fischeri).